Reading from the N-terminus, the 103-residue chain is NADH-quinone oxidoreductase subunit K (103 aa).

The next 3 membrane-spanning stretches (helical) occupy residues 6–26 (LAHYLVLGAVLFAISIVGIFL), 32–52 (IVLLMAIELMLLAVNLNFVAF), and 63–83 (VFVFFILTVAAAESAIGLAIL).

The protein belongs to the complex I subunit 4L family. In terms of assembly, NDH-1 is composed of 14 different subunits. Subunits NuoA, H, J, K, L, M, N constitute the membrane sector of the complex.

The protein resides in the cell inner membrane. The catalysed reaction is a quinone + NADH + 5 H(+)(in) = a quinol + NAD(+) + 4 H(+)(out). In terms of biological role, NDH-1 shuttles electrons from NADH, via FMN and iron-sulfur (Fe-S) centers, to quinones in the respiratory chain. The immediate electron acceptor for the enzyme in this species is believed to be ubiquinone. Couples the redox reaction to proton translocation (for every two electrons transferred, four hydrogen ions are translocated across the cytoplasmic membrane), and thus conserves the redox energy in a proton gradient. In Ralstonia pickettii (strain 12D), this protein is NADH-quinone oxidoreductase subunit K.